Consider the following 545-residue polypeptide: Glucose-6-phosphate isomerase 1 (545 aa).

Glu-356 functions as the Proton donor in the catalytic mechanism. Residues His-387 and Lys-508 contribute to the active site.

This sequence belongs to the GPI family.

It localises to the cytoplasm. It carries out the reaction alpha-D-glucose 6-phosphate = beta-D-fructose 6-phosphate. The protein operates within carbohydrate biosynthesis; gluconeogenesis. Its pathway is carbohydrate degradation; glycolysis; D-glyceraldehyde 3-phosphate and glycerone phosphate from D-glucose: step 2/4. In terms of biological role, catalyzes the reversible isomerization of glucose-6-phosphate to fructose-6-phosphate. This chain is Glucose-6-phosphate isomerase 1, found in Cupriavidus pinatubonensis (strain JMP 134 / LMG 1197) (Cupriavidus necator (strain JMP 134)).